Consider the following 333-residue polypeptide: Gap junction alpha-4 protein (333 aa).

Over 1 to 20 (MGDWGFLEKLLDQVQEHSTV) the chain is Cytoplasmic. The helical transmembrane segment at 21–40 (VGKIWLTVLFIFRILILGLA) threads the bilayer. At 41–76 (GESVWGDEQSDFECNTAQPGCTNVCYDQAFPISHIR) the chain is on the extracellular side. The helical transmembrane segment at 77-99 (YWVLQFLFVSTPTLIYLGHVIYL) threads the bilayer. The Cytoplasmic segment spans residues 100–148 (SRREERLRQKEGELRALPSKDLHVERALAAIEHQMAKISVAEDGRLRIR). Residues 149-171 (GALMGTYVVSVLCKSVLEAGFLY) traverse the membrane as a helical segment. Residues 172–208 (GQWRLYGWTMEPVFVCQRAPCPHIVDCYVSRPTEKTI) are Extracellular-facing. Residues 209–231 (FIIFMLVVGVISLVLNLLELVHL) form a helical membrane-spanning segment. The Cytoplasmic segment spans residues 232–333 (LCRCVSREIK…NSSASKKQYV (102 aa)). The interval 292–333 (ANLTTEERLTSSRPPPFVNTAPQGGRKSPSRPNSSASKKQYV) is disordered. Positions 321 to 333 (SRPNSSASKKQYV) are enriched in polar residues.

Belongs to the connexin family. Alpha-type (group II) subfamily. In terms of assembly, a connexon is composed of a hexamer of connexins. As to expression, highly expressed in lung.

Its subcellular location is the cell membrane. It localises to the cell junction. It is found in the gap junction. In terms of biological role, one gap junction consists of a cluster of closely packed pairs of transmembrane channels, the connexons, through which materials of low MW diffuse from one cell to a neighboring cell. In Mus musculus (Mouse), this protein is Gap junction alpha-4 protein (Gja4).